Here is a 168-residue protein sequence, read N- to C-terminus: MPDPARAKRLAKRISTIVASAIEYEIKDPRLAGVTITDAKVTNDLHDATLYYTVLGRSLDEEPDYEGAAAGLEKAKGVLRTKVGASLGVRFTPTLAFARDTVPDAAHRMEALLAQARAADEDLARVREGAKHAGDSDPYRVLGEGDLEGPATGGPDVEDEGGANSHDR.

The span at 125-138 (RVREGAKHAGDSDP) shows a compositional bias: basic and acidic residues. Residues 125–168 (RVREGAKHAGDSDPYRVLGEGDLEGPATGGPDVEDEGGANSHDR) form a disordered region.

This sequence belongs to the RbfA family. As to quaternary structure, monomer. Binds 30S ribosomal subunits, but not 50S ribosomal subunits or 70S ribosomes.

The protein resides in the cytoplasm. One of several proteins that assist in the late maturation steps of the functional core of the 30S ribosomal subunit. Associates with free 30S ribosomal subunits (but not with 30S subunits that are part of 70S ribosomes or polysomes). Required for efficient processing of 16S rRNA. May interact with the 5'-terminal helix region of 16S rRNA. The polypeptide is Ribosome-binding factor A (Mycolicibacterium gilvum (strain PYR-GCK) (Mycobacterium gilvum (strain PYR-GCK))).